Reading from the N-terminus, the 206-residue chain is LexA repressor (206 aa).

The H-T-H motif DNA-binding region spans 29–49 (VREICEAVGLRSTSTVHGHLA). Residues Ser-130 and Lys-167 each act as for autocatalytic cleavage activity in the active site.

The protein belongs to the peptidase S24 family. Homodimer.

The enzyme catalyses Hydrolysis of Ala-|-Gly bond in repressor LexA.. In terms of biological role, represses a number of genes involved in the response to DNA damage (SOS response), including recA and lexA. In the presence of single-stranded DNA, RecA interacts with LexA causing an autocatalytic cleavage which disrupts the DNA-binding part of LexA, leading to derepression of the SOS regulon and eventually DNA repair. The protein is LexA repressor of Alkaliphilus oremlandii (strain OhILAs) (Clostridium oremlandii (strain OhILAs)).